The primary structure comprises 238 residues: NAD(P)H-hydrate epimerase (238 aa).

The YjeF N-terminal domain maps to 10–225; that stretch reads AIKVDQILFN…ALQRQYELNL (216 aa). 68-72 provides a ligand contact to (6S)-NADPHX; that stretch reads NNGGD. K(+) contacts are provided by N69 and D133. (6S)-NADPHX contacts are provided by residues 137–143 and D166; that span reads GFSFKPP. S169 lines the K(+) pocket.

This sequence belongs to the NnrE/AIBP family. Requires K(+) as cofactor.

The catalysed reaction is (6R)-NADHX = (6S)-NADHX. The enzyme catalyses (6R)-NADPHX = (6S)-NADPHX. Its function is as follows. Catalyzes the epimerization of the S- and R-forms of NAD(P)HX, a damaged form of NAD(P)H that is a result of enzymatic or heat-dependent hydration. This is a prerequisite for the S-specific NAD(P)H-hydrate dehydratase to allow the repair of both epimers of NAD(P)HX. In Drosophila willistoni (Fruit fly), this protein is NAD(P)H-hydrate epimerase.